The following is a 153-amino-acid chain: Large ribosomal subunit protein uL15 (153 aa).

Belongs to the universal ribosomal protein uL15 family. Part of the 50S ribosomal subunit.

Binds to the 23S rRNA. This is Large ribosomal subunit protein uL15 from Pelagibacter ubique (strain HTCC1062).